The primary structure comprises 248 residues: uncharacterized protein (248 aa).

8–32 (EVALVTGASSGIGKAIALELASAGL) is an NADP(+) binding site. Serine 134 provides a ligand contact to substrate. Tyrosine 147 functions as the Proton acceptor in the catalytic mechanism.

The protein belongs to the short-chain dehydrogenases/reductases (SDR) family.

This is an uncharacterized protein from Sinorhizobium fredii (strain NBRC 101917 / NGR234).